The primary structure comprises 347 residues: MLKILWTYILFLLFISASARAEKPWYFDAIGLTETTMSLTDKNTPVVVSVVDSGVAFIGGLSDSEFAKFSFTQDGSPFPVKKSEALYIHGTAMASLIASRYGIYGVYPHALISSRRVIPDGVQDSWIRAIESIMSNVFLAPGEEKIINISGGQKGVASASVWTELLSRMGRNNDRLIVAAVGNDGADIRKLSAQQRIWPAAYHPVSSVNKKQDPVIRVAALAQYRKGETPVLHGGGITGSRFGNNWVDIAAPGQNITFLRPDAKTGTGSGTSEATAIVSGVLAAMTSCNPRATATELKRTLLESADKYPSLVDKVTEGRVLNAEKAISMFCKKNYIPVRQGRMSEEL.

Positions 1-21 are cleaved as a signal peptide; sequence MLKILWTYILFLLFISASARA. A Peptidase S8 domain is found at 24 to 327; the sequence is PWYFDAIGLT…GRVLNAEKAI (304 aa). Active-site charge relay system residues include Asp-52, His-89, and Ser-272. Cys-288 and Cys-331 form a disulfide bridge. An A2 domain region spans residues 322–347; that stretch reads NAEKAISMFCKKNYIPVRQGRMSEEL. The short motif at 344–347 is the Prevents secretion from ER element; it reads SEEL.

It belongs to the peptidase S8 family. Forms a complex with SubB with the stoichiometry SubA1:SubB5 (called SubAB5).

The protein resides in the secreted. The protein localises to the host cytoplasm. Its subcellular location is the host cytosol. It is found in the host endoplasmic reticulum lumen. In terms of biological role, protease subunit of subtilase cytotoxin SubAB5. An endoprotease specific for host endoplasmic reticulum (ER) chaperone BiP/HSPA5, has no activity on human HSP70 or HSPA8. Cleaves between 'Leu-416' and 'Leu-417' of BiP/HSPA5 in the hinge between BiP's ATPase and protein-binding domains. This induces host ER stress response and eventual cell death. Culture supernatant of E.coli expressing both subA and subB are toxic for Vero cells (African green monkey kidney cell line), Chinese hamster ovary cells and Hct-8 cells (human colonic epithelial cell line); the subunits are not toxic individually. Purified SubAB5 is highly toxic, &lt;0.1 pg is able to kill at least 50% of 30'000 Vero cells in a microtiter plate assay after 3 days; no cytotoxicity is seen at 24 hours. Preabsorption with cells expressing a ganglioside GM2 mimic reduced cytotoxicity of SubAB5 by 93% in the Vero cytotoxicity assay. Intraperitoneal injection of 200 ng of purified SubAB5 kills mice; the higher the dose the faster the mice die. Animals injected intraperitoneally with purified SubAB5 have microvascular thrombi in the brain and other organs, including the renal tubules and glomeruli. Injection induces an unfolded response in mice. Mice fed E.coli cells expressing cloned SubAB5 experience drastic weight loss and appear ill and lethargic. Protein synthesis in Vero cells is transiently inhibited by SubAB5; both subunits are required for this effect. Inhibition of protein synthesis is prevented by brefeldin A; cells are arrested in the G1 phase. SubAB5 at 100 ng/ml induced caspase-dependent apoptosis in Vero cells through mitochondrial membrane damage. In Escherichia coli, this protein is Subtilase cytotoxin subunit A.